The following is a 22-amino-acid chain: Unknown protein 10 (22 aa).

The polypeptide is Unknown protein 10 (Pseudotsuga menziesii (Douglas-fir)).